The following is a 120-amino-acid chain: Chaperonin GroEL (120 aa).

Position 23–27 (23–27) interacts with ATP; the sequence is DGTTT.

Belongs to the chaperonin (HSP60) family. Forms a cylinder of 14 subunits composed of two heptameric rings stacked back-to-back. Interacts with the co-chaperonin GroES.

The protein resides in the cytoplasm. The enzyme catalyses ATP + H2O + a folded polypeptide = ADP + phosphate + an unfolded polypeptide.. Functionally, together with its co-chaperonin GroES, plays an essential role in assisting protein folding. The GroEL-GroES system forms a nano-cage that allows encapsulation of the non-native substrate proteins and provides a physical environment optimized to promote and accelerate protein folding. The protein is Chaperonin GroEL of Mycobacterium intracellulare.